The primary structure comprises 1430 residues: Caskin-1 (1430 aa).

ANK repeat units lie at residues 48 to 77 (DGFS…AVDI), 81 to 110 (KGMR…AVNV), 114 to 143 (EGHI…NPCI), 147 to 176 (SGKT…CAAL), 188 to 217 (NGTS…DINR), and 220 to 249 (KSGT…NAQV). Tyr-253 is subject to Phosphotyrosine. In terms of domain architecture, SH3 spans 281–347 (SAALQVRATK…PSSLGEAIVK (67 aa)). Residues 348–372 (RAGSRTGSEPSPPQGGGSLGPSAPP) are disordered. At Ser-358 the chain carries Phosphoserine. Residues 375–471 (IWVLRKPFAG…PKKLESSSAS (97 aa)) form a CASK-binding region. Arg-398 bears the Omega-N-methylarginine mark. The segment covering 421 to 430 (QKSVSESSPG) has biased composition (polar residues). A disordered region spans residues 421-472 (QKSVSESSPGDSPVKPPEGSSGAARSQPPAAHAGQVYGEQPPKKLESSSASE). Ser-423 and Ser-432 each carry phosphoserine. 2 SAM domains span residues 474–537 (KSAE…LNIP) and 543–607 (HKPA…LAEL). A phosphoserine mark is found at Ser-635 and Ser-648. The span at 667–679 (LSGPAEAGAAAAE) shows a compositional bias: low complexity. 4 disordered regions span residues 667-1001 (LSGP…SAGS), 1015-1040 (GGGG…DPGR), 1055-1371 (GPDG…RQKL), and 1388-1407 (KIRQ…EKST). Polar residues predominate over residues 683–711 (NHLPATPRTTSRQESSLSGRARHMSSSQE). Phosphoserine is present on residues Ser-722 and Ser-727. Thr-740 carries the post-translational modification Phosphothreonine. A Phosphoserine modification is found at Ser-790. Pro residues predominate over residues 847–859 (PPAPGPVPPPVPA). Residues Ser-890, Ser-892, and Ser-988 each carry the phosphoserine modification. Pro residues predominate over residues 1027–1036 (GHPTPRPASP). Thr-1066 carries the post-translational modification Phosphothreonine. A Phosphoserine modification is found at Ser-1068. Basic and acidic residues predominate over residues 1147–1159 (DTVKRRPKAKEPD). Positions 1190-1214 (PELPPPPPPAEPPPTDLMPLPPLPL) are enriched in pro residues. Residue Ser-1258 is modified to Phosphoserine. Thr-1267 carries the phosphothreonine modification. Over residues 1267–1282 (TPPPVSPKPPPPPTAP) the composition is skewed to pro residues. Low complexity-rich tracts occupy residues 1283–1298 (KPAK…SATP), 1308–1326 (PPAA…SASP), and 1344–1358 (PRAA…PVAS). Position 1362 is a phosphoserine (Ser-1362). Residues 1388-1406 (KIRQEDGQGPRPSSIEEKS) show a composition bias toward basic and acidic residues.

As to quaternary structure, polymerizes, via the tandem SAM domains, to form long, 8 nM wide fibers, upon which other proteins can assemble. Binds the CaM kinase domain of CASK. Forms a ternary complex with CASK and LIN7A, LIN7B or LIN7C. Competes with APBA1 that forms a similar complex with CASK and LIN7 proteins. The tripartite complex CASKIN1/CASK/LIN7(A/B/C) binds the cytoplasmic tail of NRXN1. Expressed in brain. Localized primarily to the neuropil and enriched in synaptic areas (at protein level).

It is found in the cytoplasm. May link the scaffolding protein CASK to downstream intracellular effectors. This chain is Caskin-1 (Caskin1), found in Rattus norvegicus (Rat).